We begin with the raw amino-acid sequence, 211 residues long: LexA repressor (211 aa).

Positions 27-47 (QTEIARAFGFKGVRAVQHHLD) form a DNA-binding region, H-T-H motif. Residues Ser131 and Lys168 each act as for autocatalytic cleavage activity in the active site.

It belongs to the peptidase S24 family. In terms of assembly, homodimer.

The catalysed reaction is Hydrolysis of Ala-|-Gly bond in repressor LexA.. Represses a number of genes involved in the response to DNA damage (SOS response), including recA and lexA. In the presence of single-stranded DNA, RecA interacts with LexA causing an autocatalytic cleavage which disrupts the DNA-binding part of LexA, leading to derepression of the SOS regulon and eventually DNA repair. The polypeptide is LexA repressor (Xylella fastidiosa (strain M23)).